Here is a 240-residue protein sequence, read N- to C-terminus: MAPK-interacting and spindle-stabilizing protein-like (240 aa).

The tract at residues 1–240 is disordered; the sequence is MSDEFSLADA…PMPGGPHSYH (240 aa). Serine 2 carries the post-translational modification N-acetylserine. Serine 2, serine 6, and serine 15 each carry phosphoserine. Residues 16–26 are compositionally biased toward polar residues; sequence PAKTSAVSNTK. Low complexity predominate over residues 34–43; the sequence is WPGSNPWNNP. Composition is skewed to pro residues over residues 44–66, 74–122, 159–185, and 193–202; these read SAPP…PFGP, SVPP…PELP, PNMP…PPVP, and AWGPPAPYPA.

This sequence belongs to the MISS family.

The sequence is that of MAPK-interacting and spindle-stabilizing protein-like (MAPK1IP1L) from Bos taurus (Bovine).